We begin with the raw amino-acid sequence, 995 residues long: MFNRLNKFQAALALALYSQSALGQYYSNSTSISSNSSSTSVVSSSSGSVSISSSIAETSSSATDILSSITQSASSTSGVSSSVGPSSSSVVSSSVSQSSSSVSDVSSSVSQSSSSASDVSSSVSQSASSTSDVSSSVSQSSSSASDVSSSVSQSSSSASDVSSSVSQSASSASDVSSSVSQSASSTSDVSSSVSQSSSSASDVSSSVSQSSSSASDVSSSVSQSASSTSDVSSSVSQSASSTSGVSSSGSQSVSSASGSSSSFPQSTSSASTASGSATSNSLSSITSSASSASATASNSLSSSDGTIYLPTTTISGDLTLTGKVIATEGVVVAAGAKLTLLDGDKYSFSADLKVYGDLLVKKSKETYPGTEFDISGENFDVTGNFNAEESAATSASIYSFTPSSFDNSGDISLSLSKSKKGEVTFSPYSNSGAFSFSNAILNGGSVSGLQRRDDTEGSVNNGEINLDNGSTYVIVEPVSGKGTVNIISGNLYLHYPDTFTGQTVVFKGEGVLAVDPTETNATPIPVVGYTGKNQIAITADITALSYDGTTGVLTATQGNRQFSFAIGTGFSSSDFSVSEGIFAGAYAYYLNYNGVVATSAASSSTASGASASVTGSTSFGASVTGSTASTSFGASVTGSTASTSFGASVTGSTSVYTTTLDYVNATSTVVVSCSETTDSNGNVYTITTTVPCSSTTATITSCDETGCHVSTSTGAVVTETVSSKSYTTATVTHCDDNGCNTKTVTSECSKETSATTASPKSYTTVTVTHCDDNGCNTKTVTSEAPEATTTTTVSSQSYTTATVTHCDDNGCKTKTVTSEAPEATTTTVSPKTYTTATVTQCDDNGCSTKTVTSECPEETSATTTSPKSYTTVTVTHCDDNGCNTKTVTSEAPEATTTTVSPKTYTTATVTQCDDNGCSTKTVTSEAPKETSETSETSAAPKDIHYCHWLLNGDDNGCNVKIITSKIPEATSTVTQLVLLQSHTLLSLLRVLKQPH.

Positions 1–23 (MFNRLNKFQAALALALYSQSALG) are cleaved as a signal peptide. The Methyl-accepting transducer domain maps to 26 to 253 (YSNSTSISSN…GVSSSGSQSV (228 aa)). Residues Asn28 and Asn35 are each glycosylated (N-linked (GlcNAc...) asparagine). The disordered stretch occupies residues 98 to 276 (SSSSVSDVSS…TSSASTASGS (179 aa)). 2 N-linked (GlcNAc...) asparagine glycosylation sites follow: Asn468 and Asn664.

Belongs to the SRP1/TIP1 family.

It is found in the secreted. Secreted protein that may be involved in cell wall organization and biosynthesis. The protein is Secreted protein CSS1 of Saccharomyces cerevisiae (strain ATCC 204508 / S288c) (Baker's yeast).